A 463-amino-acid polypeptide reads, in one-letter code: A-type ATP synthase subunit B (463 aa).

The protein belongs to the ATPase alpha/beta chains family. In terms of assembly, has multiple subunits with at least A(3), B(3), C, D, E, F, H, I and proteolipid K(x).

It is found in the cell membrane. Functionally, component of the A-type ATP synthase that produces ATP from ADP in the presence of a proton gradient across the membrane. The B chain is a regulatory subunit. This Thermococcus sp. (strain KI) protein is A-type ATP synthase subunit B.